An 861-amino-acid polypeptide reads, in one-letter code: MTGRARARARGRARGQETAQLVGSTASQQPGYIQPRPQPPPAEGELFGRGRQRGTAGGTAKSQGLQISAGFQELSLAERGGRRRDFHDLGVNTRQNLDHVKESKTGSSGIIVRLSTNHFRLTSRPQWALYQYHIDYNPLMEARRLRSALLFQHEDLIGKCHAFDGTILFLPKRLQQKVTEVFSKTRNGEDVRITITLTNELPPTSPTCLQFYNIIFRRLLKIMNLQQIGRNYYNPNDPIDIPSHRLVIWPGFTTSILQYENSIMLCTDVSHKVLRSETVLDFMFNFYHQTEEHKFQEQVSKELIGLVVLTKYNNKTYRVDDIDWDQNPKSTFKKADGSEVSFLEYYRKQYNQEITDLKQPVLVSQPKRRRGPGGTLPGPAMLIPELCYLTGLTDKMRNDFNVMKDLAVHTRLTPEQRQREVGRLIDYIHKNDNVQRELRDWGLSFDSNLLSFSGRILQTEKIHQGGKTFDYNPQFADWSKETRGAPLISVKPLDNWLLIYTRRNYEAANSLIQNLFKVTPAMGMQMRKAIMIEVDDRTEAYLRVLQQKVTADTQIVVCLLSSNRKDKYDAIKKYLCTDCPTPSQCVVARTLGKQQTVMAIATKIALQMNCKMGGELWRVDIPLKLVMIVGIDCYHDMTAGRRSIAGFVASINEGMTRWFSRCIFQDRGQELVDGLKVCLQAALRAWNSCNEYMPSRIIVYRDGVGDGQLKTLVNYEVPQFLDCLKSIGRGYNPRLTVIVVKKRVNTRFFAQSGGRLQNPLPGTVIDVEVTRPEWYDFFIVSQAVRSGSVSPTHYNVIYDNSGLKPDHIQRLTYKLCHIYYNWPGVIRVPAPCQYAHKLAFLVGQSIHREPNLSLSNRLYYL.

Positions 1–13 are enriched in basic residues; the sequence is MTGRARARARGRA. The tract at residues 1–64 is disordered; it reads MTGRARARAR…TAGGTAKSQG (64 aa). At R14 the chain carries Omega-N-methylarginine; by PRMT5; alternate. R14 carries the symmetric dimethylarginine; by PRMT5; alternate modification. Over residues 17–27 the composition is skewed to polar residues; sequence ETAQLVGSTAS. R49 is subject to Omega-N-methylarginine; by PRMT5. R53 is subject to Omega-N-methylarginine; alternate. R53 bears the Symmetric dimethylarginine; alternate mark. The short motif at 217–224 is the D-box element; that stretch reads RRLLKIMN. Residues 278–391 enclose the PAZ domain; the sequence is TVLDFMFNFY…LIPELCYLTG (114 aa). A required for binding 2'-O-methylated 3'-end of piRNAs region spans residues 316 to 318; sequence TYR. Omega-N-methylarginine; by PRMT5 is present on R370. The segment at 479-615 is MID region; it reads SKETRGAPLI…LQMNCKMGGE (137 aa). Residues 555–847 enclose the Piwi domain; the sequence is IVVCLLSSNR…LAFLVGQSIH (293 aa). Active-site residues include D632, E670, D702, and H836.

The protein belongs to the argonaute family. Piwi subfamily. As to quaternary structure, interacts (via Piwi domain) with DICER1, suggesting that it forms ribonucleoprotein RISC complexes; this interaction is regulated by HSP90AB1 activity. Interacts with MAEL, KIF17, PABPC1, PRMT5 and WDR77. Interacts (when methylated on arginine residues) with TDRD1, TDRKH/TDRD2, RNF17/TDRD4, TDRD6, TDRD7 and TDRD9. Interacts with CLOCK. Interacts with MOV10L1. Interacts with ANAPC10; interaction oly takes place following piRNA-binding. Interacts with RNF8; leading to sequester RNF8 in the cytoplasm. Interacts with TEX19. Mg(2+) is required as a cofactor. Arginine methylation by PRMT5 is required for the interaction with Tudor domain-containing protein (TDRD1, TDRKH/TDRD2, RNF17/TDRD4, TDRD6, TDRD7 and TDRD9) and subsequent localization to the meiotic nuage, also named P granule. Post-translationally, ubiquitinated by the anaphase promoting complex/cyclosome (APC/C) in late spermatids, leading to its degradation. Ubiquitination only takes place following piRNA-binding in adult testis. Ubiquitination and degradation in late spermatogenesis by APC/C is probably required to release RNF8 from the cytoplasm and promote histone to protamine exchange by RNF8. Expressed in spermatocytes and spermatids. Also detected in prostate cancer (at protein level). Detected in most fetal and adult tissues. Expressed in testes, specifically in germline cells; detected in spermatocytes and spermatids during spermatogenesis. Increased expression in testicular tumors originating from embryonic germ cells with retention of germ cells phenotype. No expression in testicular tumors of somatic origin, such as Sertoli cell and Leydig cell tumors. Overexpressed in gastric cancer cells. Isoform 3: Ubiquitously expressed, and specifically in CD34(+) hematopoietic progenitor cells but not in more differentiated cells.

It is found in the cytoplasm. Its function is as follows. Endoribonuclease that plays a central role in postnatal germ cells by repressing transposable elements and preventing their mobilization, which is essential for the germline integrity. Acts via the piRNA metabolic process, which mediates the repression of transposable elements during meiosis by forming complexes composed of piRNAs and Piwi proteins and governs the methylation and subsequent repression of transposons. Directly binds methylated piRNAs, a class of 24 to 30 nucleotide RNAs that are generated by a Dicer-independent mechanism and are primarily derived from transposons and other repeated sequence elements. Strongly prefers a uridine in the first position of their guide (g1U preference, also named 1U-bias). Not involved in the piRNA amplification loop, also named ping-pong amplification cycle. Acts as an endoribonuclease that cleaves transposon messenger RNAs. Besides their function in transposable elements repression, piRNAs are probably involved in other processes during meiosis such as translation regulation. Probable component of some RISC complex, which mediates RNA cleavage and translational silencing. Also plays a role in the formation of chromatoid bodies and is required for some miRNAs stability. Required to sequester RNF8 in the cytoplasm until late spermatogenesis; RNF8 being released upon ubiquitination and degradation of PIWIL1. Functionally, may be a negative developmental regulator. The chain is Piwi-like protein 1 (PIWIL1) from Homo sapiens (Human).